The chain runs to 100 residues: Urease subunit gamma (100 aa).

This sequence belongs to the urease gamma subunit family. As to quaternary structure, heterotrimer of UreA (gamma), UreB (beta) and UreC (alpha) subunits. Three heterotrimers associate to form the active enzyme.

The protein resides in the cytoplasm. It catalyses the reaction urea + 2 H2O + H(+) = hydrogencarbonate + 2 NH4(+). It functions in the pathway nitrogen metabolism; urea degradation; CO(2) and NH(3) from urea (urease route): step 1/1. The protein is Urease subunit gamma of Rhodopseudomonas palustris (strain ATCC BAA-98 / CGA009).